The primary structure comprises 280 residues: MNNIIDVKNLTYKYANSGDKKALDNVSLSIEKGSWTSIVGHNGSGKSTLARSIDGLMSYNEGVINVDGIILSDDTVWDIRKKIGMIFQNPDNQFVGATVEDDVAFGLENLGIETDKMHKIVNNVLKKVRMEDFKERQPDQLSGGQKQRVAIAGVLASKPEIIILDEATSMLDPQGRYEIINLINEIHQENDITVISITHDVSEAMLSDHVIVLNDGKIVESGAPKKVFNDDEMLKLTGLEKPFNAHLFDALVEQGIHPPVELRMDENDLEEWLCQLLLKA.

Positions 5–240 constitute an ABC transporter domain; it reads IDVKNLTYKY…DEMLKLTGLE (236 aa). An ATP-binding site is contributed by 40–47; that stretch reads GHNGSGKS.

Belongs to the ABC transporter superfamily. Energy-coupling factor EcfA family. As to quaternary structure, forms a stable energy-coupling factor (ECF) transporter complex composed of 2 membrane-embedded substrate-binding proteins (S component), 2 ATP-binding proteins (A component) and 2 transmembrane proteins (T component).

Its subcellular location is the cell membrane. Its function is as follows. ATP-binding (A) component of a common energy-coupling factor (ECF) ABC-transporter complex. Unlike classic ABC transporters this ECF transporter provides the energy necessary to transport a number of different substrates. The chain is Energy-coupling factor transporter ATP-binding protein EcfA from Pediococcus pentosaceus (strain ATCC 25745 / CCUG 21536 / LMG 10740 / 183-1w).